A 380-amino-acid chain; its full sequence is Queuine tRNA-ribosyltransferase (380 aa).

The active-site Proton acceptor is the Asp-93. Residues 93 to 97 (DSGGF), Asp-147, Gln-198, and Gly-225 contribute to the substrate site. An RNA binding region spans residues 256 to 262 (GVGLPSN). Residue Asp-275 is the Nucleophile of the active site. The interval 280–284 (ARNGR) is RNA binding; important for wobble base 34 recognition. 4 residues coordinate Zn(2+): Cys-313, Cys-315, Cys-318, and His-344.

Belongs to the queuine tRNA-ribosyltransferase family. In terms of assembly, homodimer. Within each dimer, one monomer is responsible for RNA recognition and catalysis, while the other monomer binds to the replacement base PreQ1. The cofactor is Zn(2+).

The catalysed reaction is 7-aminomethyl-7-carbaguanine + guanosine(34) in tRNA = 7-aminomethyl-7-carbaguanosine(34) in tRNA + guanine. It participates in tRNA modification; tRNA-queuosine biosynthesis. Catalyzes the base-exchange of a guanine (G) residue with the queuine precursor 7-aminomethyl-7-deazaguanine (PreQ1) at position 34 (anticodon wobble position) in tRNAs with GU(N) anticodons (tRNA-Asp, -Asn, -His and -Tyr). Catalysis occurs through a double-displacement mechanism. The nucleophile active site attacks the C1' of nucleotide 34 to detach the guanine base from the RNA, forming a covalent enzyme-RNA intermediate. The proton acceptor active site deprotonates the incoming PreQ1, allowing a nucleophilic attack on the C1' of the ribose to form the product. After dissociation, two additional enzymatic reactions on the tRNA convert PreQ1 to queuine (Q), resulting in the hypermodified nucleoside queuosine (7-(((4,5-cis-dihydroxy-2-cyclopenten-1-yl)amino)methyl)-7-deazaguanosine). The sequence is that of Queuine tRNA-ribosyltransferase from Clostridium perfringens (strain ATCC 13124 / DSM 756 / JCM 1290 / NCIMB 6125 / NCTC 8237 / Type A).